We begin with the raw amino-acid sequence, 804 residues long: Probable copper-exporting P-type ATPase (804 aa).

Residues 1-101 (MVKDTYISSA…VEHLSRMKRK (101 aa)) are Cytoplasmic-facing. The 67-residue stretch at 16-82 (MERTVRVTGM…VIEDLGYGVV (67 aa)) folds into the HMA 1 domain. Cu(+) contacts are provided by Cys-27 and Cys-30. The chain crosses the membrane as a helical span at residues 102-122 (LYVAAFAGVLLLFLAHFISLP). The Extracellular portion of the chain corresponds to 123-128 (YEDFVQ). A helical membrane pass occupies residues 129 to 149 (LLIALPAIFYSGSSIFKAAFS). Residues 150 to 159 (ALRRRTLNMD) lie on the Cytoplasmic side of the membrane. Residues 160–180 (VMYSMGVGAAFLASVLSTAGV) traverse the membrane as a helical segment. Residues 181 to 186 (LPREYS) are Extracellular-facing. A helical membrane pass occupies residues 187 to 204 (FYETSVLLLAFLLLGRTL). Residues 205–339 (EARAKSRTGE…PIQRLADKVV (135 aa)) are Cytoplasmic-facing. Residues 340 to 360 (AYFIPTVLLVAISAFIYWYFI) traverse the membrane as a helical segment. Residues 361 to 364 (AHAP) are Extracellular-facing. Residues 365 to 385 (LLFAFTTLIAVLVVACPCAFG) traverse the membrane as a helical segment. The Cytoplasmic segment spans residues 386-680 (LATPTALTVG…KIKQNIFWAL (295 aa)). Asp-424 acts as the 4-aspartylphosphate intermediate in catalysis. ATP-binding positions include 457–462 (ERRSEH) and 490–501 (GEGVVADGILVG). Residues Asp-618 and Asp-622 each coordinate Mg(2+). The helical transmembrane segment at 681 to 701 (IYNVILIPAAAGLLYPIFGVV) threads the bilayer. Over 702 to 704 (FRP) the chain is Extracellular. A helical membrane pass occupies residues 705 to 725 (EFAGLAMAMSSVSVVANSLLL). Topologically, residues 726-804 (RNYVPPIRRG…AAGYQAKLRS (79 aa)) are cytoplasmic. Residues 740 to 801 (EKIVLELSGL…AVEAAGYQAK (62 aa)) form the HMA 2 domain. Cys-751 and Cys-754 together coordinate Cu(+).

Belongs to the cation transport ATPase (P-type) (TC 3.A.3) family. Type IB subfamily. Interacts with CopZ probably in the CopZ Cu(+)-bound form.

The protein localises to the cell membrane. It carries out the reaction Cu(+)(in) + ATP + H2O = Cu(+)(out) + ADP + phosphate + H(+). Activated by Cu(+) and Ag(+) and inhibited by vanadate. Activated by CopZ in its Cu(+)-bound form. Functionally, probably involved in copper and silver export. The protein is Probable copper-exporting P-type ATPase (copA) of Archaeoglobus fulgidus (strain ATCC 49558 / DSM 4304 / JCM 9628 / NBRC 100126 / VC-16).